Here is a 97-residue protein sequence, read N- to C-terminus: Type VII secretion system extracellular protein A (97 aa).

The stretch at 61–93 (KVEKFAQLLEEIKQQLNSTADAVQEQDQQLSNN) forms a coiled coil.

Belongs to the WXG100 family. sagEsxA-like subfamily. As to quaternary structure, forms both homodimers and heterodimers with EsxC.

It is found in the secreted. Its function is as follows. Virulence factor that is important for the establishment of infection in the host. EsxA is required for EsxB synthesis as well as secretion. Modulates host cell apoptotic pathways and mediates together with EsxB the release of S.aureus from the host cell. By acting on apoptosis, plays a role in the modulation of dendritic cell-mediated immunity. In Staphylococcus aureus (strain USA300), this protein is Type VII secretion system extracellular protein A.